The following is a 446-amino-acid chain: Maltoporin (446 aa).

The signal sequence occupies residues 1-25 (MMTTLRKLPLAVAVAAGMMSVQAMA).

Belongs to the porin LamB (TC 1.B.3) family. In terms of assembly, homotrimer formed of three 18-stranded antiparallel beta-barrels, containing three independent channels.

The protein localises to the cell outer membrane. It carries out the reaction beta-maltose(in) = beta-maltose(out). Functionally, involved in the transport of maltose and maltodextrins. This Escherichia fergusonii (strain ATCC 35469 / DSM 13698 / CCUG 18766 / IAM 14443 / JCM 21226 / LMG 7866 / NBRC 102419 / NCTC 12128 / CDC 0568-73) protein is Maltoporin.